A 107-amino-acid polypeptide reads, in one-letter code: Large ribosomal subunit protein uL24 (107 aa).

Belongs to the universal ribosomal protein uL24 family. As to quaternary structure, part of the 50S ribosomal subunit.

One of two assembly initiator proteins, it binds directly to the 5'-end of the 23S rRNA, where it nucleates assembly of the 50S subunit. Functionally, one of the proteins that surrounds the polypeptide exit tunnel on the outside of the subunit. The chain is Large ribosomal subunit protein uL24 from Malacoplasma penetrans (strain HF-2) (Mycoplasma penetrans).